The sequence spans 123 residues: WAP four-disulfide core domain protein 5 (123 aa).

The first 24 residues, 1–24 (MRIQSLLLLGALLAVGSQLPAVFG), serve as a signal peptide directing secretion. WAP domains are found at residues 27 to 73 (KGEK…CVPR) and 74 to 121 (VSVK…RDPA). 8 disulfides stabilise this stretch: cysteine 34-cysteine 62, cysteine 41-cysteine 66, cysteine 49-cysteine 61, cysteine 55-cysteine 70, cysteine 81-cysteine 109, cysteine 88-cysteine 113, cysteine 96-cysteine 108, and cysteine 102-cysteine 117.

Its subcellular location is the secreted. Putative acid-stable proteinase inhibitor. The polypeptide is WAP four-disulfide core domain protein 5 (WFDC5) (Papio anubis (Olive baboon)).